A 209-amino-acid chain; its full sequence is Ribosomal RNA large subunit methyltransferase E (209 aa).

S-adenosyl-L-methionine-binding residues include G63, W65, D83, D99, and D124. Residue K164 is the Proton acceptor of the active site. Residues 191–209 (EASRGRSREVYIVAMGYMG) enclose the TRAM domain.

This sequence belongs to the class I-like SAM-binding methyltransferase superfamily. RNA methyltransferase RlmE family.

The protein resides in the cytoplasm. It catalyses the reaction uridine(2552) in 23S rRNA + S-adenosyl-L-methionine = 2'-O-methyluridine(2552) in 23S rRNA + S-adenosyl-L-homocysteine + H(+). Functionally, specifically methylates the uridine in position 2552 of 23S rRNA at the 2'-O position of the ribose in the fully assembled 50S ribosomal subunit. This Histophilus somni (strain 129Pt) (Haemophilus somnus) protein is Ribosomal RNA large subunit methyltransferase E.